A 236-amino-acid polypeptide reads, in one-letter code: Exotoxin type H (236 aa).

A signal peptide spans 1–32; that stretch reads MRYNCRYSHIDKKIYSMIICLSFLLYSNVVQA.

Belongs to the staphylococcal/streptococcal toxin family.

It localises to the secreted. Mitogenic for human peripheral blood lymphocytes. This chain is Exotoxin type H (speH), found in Streptococcus pyogenes serotype M1.